Consider the following 288-residue polypeptide: Geranylgeranyl diphosphate synthase (288 aa).

Residues R43 and H73 each contribute to the isopentenyl diphosphate site. 2 residues coordinate Mg(2+): D80 and D86. R91 is a (2E,6E)-farnesyl diphosphate binding site. R92 is an isopentenyl diphosphate binding site. (2E,6E)-farnesyl diphosphate contacts are provided by K170, T171, and Q205.

This sequence belongs to the FPP/GGPP synthase family. Requires Mg(2+) as cofactor.

It carries out the reaction isopentenyl diphosphate + (2E,6E)-farnesyl diphosphate = (2E,6E,10E)-geranylgeranyl diphosphate + diphosphate. The protein operates within isoprenoid biosynthesis; geranylgeranyl diphosphate biosynthesis; geranylgeranyl diphosphate from farnesyl diphosphate and isopentenyl diphosphate: step 1/1. Functionally, catalyzes the condensation of farnesyl diphosphate (FPP) and isopentenyl diphosphate (IPP) to yield geranylgeranyl diphosphate (GGPP) needed for biosynthesis of carotenoids and diterpenes. This chain is Geranylgeranyl diphosphate synthase (crtE), found in Cereibacter sphaeroides (strain ATCC 17023 / DSM 158 / JCM 6121 / CCUG 31486 / LMG 2827 / NBRC 12203 / NCIMB 8253 / ATH 2.4.1.) (Rhodobacter sphaeroides).